The following is a 930-amino-acid chain: Isoleucine--tRNA ligase (930 aa).

A 'HIGH' region motif is present at residues 57 to 67; that stretch reads PYANGNIHVGH. Position 554 (E554) interacts with L-isoleucyl-5'-AMP. A 'KMSKS' region motif is present at residues 595-599; that stretch reads KMSKS. K598 lines the ATP pocket. Zn(2+) is bound by residues C888, C891, C908, and C911.

This sequence belongs to the class-I aminoacyl-tRNA synthetase family. IleS type 1 subfamily. In terms of assembly, monomer. Zn(2+) serves as cofactor.

Its subcellular location is the cytoplasm. The catalysed reaction is tRNA(Ile) + L-isoleucine + ATP = L-isoleucyl-tRNA(Ile) + AMP + diphosphate. Catalyzes the attachment of isoleucine to tRNA(Ile). As IleRS can inadvertently accommodate and process structurally similar amino acids such as valine, to avoid such errors it has two additional distinct tRNA(Ile)-dependent editing activities. One activity is designated as 'pretransfer' editing and involves the hydrolysis of activated Val-AMP. The other activity is designated 'posttransfer' editing and involves deacylation of mischarged Val-tRNA(Ile). This Streptococcus pneumoniae serotype 19F (strain G54) protein is Isoleucine--tRNA ligase.